A 2430-amino-acid polypeptide reads, in one-letter code: Spatacsin (2430 aa).

Ser-1942 and Ser-1943 each carry phosphoserine.

In terms of assembly, interacts with AP5Z1, AP5B1, AP5S1 and ZFYVE26. In terms of tissue distribution, ubiquitously expressed at low level. Expressed in embryonic and adult cortical projection neurons.

It localises to the cytoplasm. Its subcellular location is the cytosol. The protein resides in the nucleus. The protein localises to the cell projection. It is found in the axon. It localises to the dendrite. Its subcellular location is the synapse. In terms of biological role, may play a role in neurite plasticity by maintaining cytoskeleton stability and regulating synaptic vesicle transport. This chain is Spatacsin (Spg11), found in Mus musculus (Mouse).